The following is a 127-amino-acid chain: Ribonuclease P protein component (127 aa).

It belongs to the RnpA family. In terms of assembly, consists of a catalytic RNA component (M1 or rnpB) and a protein subunit.

The enzyme catalyses Endonucleolytic cleavage of RNA, removing 5'-extranucleotides from tRNA precursor.. Functionally, RNaseP catalyzes the removal of the 5'-leader sequence from pre-tRNA to produce the mature 5'-terminus. It can also cleave other RNA substrates such as 4.5S RNA. The protein component plays an auxiliary but essential role in vivo by binding to the 5'-leader sequence and broadening the substrate specificity of the ribozyme. This chain is Ribonuclease P protein component, found in Agrobacterium fabrum (strain C58 / ATCC 33970) (Agrobacterium tumefaciens (strain C58)).